We begin with the raw amino-acid sequence, 1074 residues long: Collagen, type I, alpha 1a (1074 aa).

Residues 1 to 13 show a composition bias toward pro residues; sequence KSPAMPVPGPMGP. The tract at residues 1-1010 is disordered; the sequence is KSPAMPVPGP…PQEKAPDPYR (1010 aa). Positions 14-36 are enriched in low complexity; that stretch reads MGPRSGPQGFPGEAGAAGAMGPR. Residues 45-59 show a composition bias toward basic and acidic residues; that stretch reads NGEDGESGKPGRGGE. Low complexity predominate over residues 129-147; sequence TGAAGAAGARGNDGAAGAA. The segment covering 149–162 has biased composition (pro residues); that stretch reads PPGPTGPAGPPGFP. Residues 163–181 are compositionally biased toward gly residues; it reads GGPGAKGDAGAQGGRGPEG. Low complexity-rich tracts occupy residues 182–225, 234–272, and 290–299; these read PAGA…AGAP, SGPQ…APGV, and EPGAAGARGA. Over residues 301-313 the composition is skewed to gly residues; the sequence is GERGGPGGRGFPG. 3 stretches are compositionally biased toward low complexity: residues 377 to 392, 469 to 530, and 563 to 578; these read VGAR…PGPK, VPGE…QGMP, and RGLT…AGAT. A compositionally biased stretch (gly residues) spans 588 to 597; that stretch reads GPVGPGGARG. Low complexity-rich tracts occupy residues 611-647 and 661-683; these read AGFA…AGPT and PKGA…AGRV. Residues 685 to 697 are compositionally biased toward pro residues; sequence PPGPSGNPGPPGP. Low complexity-rich tracts occupy residues 715-742 and 803-823; these read PAGR…SEGA and PGLA…SEGS. The segment covering 847-857 has biased composition (pro residues); the sequence is APGPPGAPGPV. Over residues 871–890 the composition is skewed to low complexity; sequence PAGPAGSAGPAGPRGPAGAP. The span at 893–907 shows a compositional bias: basic and acidic residues; that stretch reads RGDKGESGEAGERGH. A compositionally biased stretch (low complexity) spans 920-956; sequence SGSSGEQGPAGAAGPAGPRGPAGSAGSPGKDGMSGLP. The span at 974–986 shows a compositional bias: pro residues; the sequence is AGPPGPPGPPGAP. Residues 1014–1074 form the Fibrillar collagen NC1 domain; that stretch reads LEVDSTLKSL…GLEVGPVCFL (61 aa).

This sequence belongs to the fibrillar collagen family.

Its subcellular location is the secreted. The protein localises to the extracellular space. The protein resides in the extracellular matrix. The protein is Collagen, type I, alpha 1a of Epinephelus marginatus (Dusky grouper).